The following is a 620-amino-acid chain: MMMGRLVFVIWLYNCLCLLLLSSLVDADQANIDCLRTFKSQVEDPNRYLSTWVFGNETAGYICKFSGVTCWHDDENRVLSIKLSGYGLRGVFPPAVKLCADLTGLDLSRNNFSGPLPANISTLIPLVTILDLSYNSFSGEIPMLISNITFLNTLMLQHNQFTGTLPPQLAQLGRLKTFSVSDNRLVGPIPNFNQTLQFKQELFANNLDLCGKPLDDCKSASSSRGKVVIIAAVGGLTAAALVVGVVLFFYFRKLGAVRKKQDDPEGNRWAKSLKGQKGVKVFMFKKSVSKMKLSDLMKATEEFKKDNIIATGRTGTMYKGRLEDGSLLMIKRLQDSQRSEKEFDAEMKTLGSVKNRNLVPLLGYCVANKERLLMYEYMANGYLYDQLHPADEESFKPLDWPSRLKIAIGTAKGLAWLHHSCNPRIIHRNISSKCILLTAEFEPKISDFGLARLMNPIDTHLSTFVNGEFGDFGYVAPEYSRTMVATPKGDVYSFGVVLLELVTGQKATSVTKVSEEKAEEENFKGNLVEWITKLSSESKLQEAIDRSLLGNGVDDEIFKVLKVACNCVLPEIAKQRPTMFEVYQLLRAIGESYNFTADDDILIPSESGEGDFIEELIVAR.

Residues 1 to 27 (MMMGRLVFVIWLYNCLCLLLLSSLVDA) form the signal peptide. Over 28–228 (DQANIDCLRT…SASSSRGKVV (201 aa)) the chain is Extracellular. Residues Asn56, Asn111, Asn119, and Asn147 are each glycosylated (N-linked (GlcNAc...) asparagine). LRR repeat units follow at residues 101–124 (DLTG…STLI), 126–148 (LVTI…ISNI), 150–172 (FLNT…LAQL), and 174–196 (RLKT…NQTL). An N-linked (GlcNAc...) asparagine glycan is attached at Asn193. Residues 229 to 249 (IIAAVGGLTAAALVVGVVLFF) form a helical membrane-spanning segment. The Cytoplasmic segment spans residues 250-620 (YFRKLGAVRK…DFIEELIVAR (371 aa)). Thr300 carries the post-translational modification Phosphothreonine. The region spanning 303 to 596 (FKKDNIIATG…RAIGESYNFT (294 aa)) is the Protein kinase domain. Residues 309 to 317 (IATGRTGTM) and Lys331 contribute to the ATP site. A Phosphothreonine modification is found at Thr463. Tyr479 is subject to Phosphotyrosine. A Phosphothreonine modification is found at Thr482.

The protein belongs to the protein kinase superfamily. Ser/Thr protein kinase family.

It localises to the cell membrane. This is Probably inactive leucine-rich repeat receptor-like protein kinase At5g48380 from Arabidopsis thaliana (Mouse-ear cress).